We begin with the raw amino-acid sequence, 485 residues long: Glycogen synthase (485 aa).

ADP-alpha-D-glucose is bound at residue K20.

This sequence belongs to the glycosyltransferase 1 family. Bacterial/plant glycogen synthase subfamily.

The catalysed reaction is [(1-&gt;4)-alpha-D-glucosyl](n) + ADP-alpha-D-glucose = [(1-&gt;4)-alpha-D-glucosyl](n+1) + ADP + H(+). It participates in glycan biosynthesis; glycogen biosynthesis. In terms of biological role, synthesizes alpha-1,4-glucan chains using ADP-glucose. The protein is Glycogen synthase of Vibrio vulnificus (strain YJ016).